The chain runs to 512 residues: UDP-N-acetylmuramate--L-alanine ligase (512 aa).

132–138 (GAHGKTT) serves as a coordination point for ATP.

This sequence belongs to the MurCDEF family.

The protein localises to the cytoplasm. The enzyme catalyses UDP-N-acetyl-alpha-D-muramate + L-alanine + ATP = UDP-N-acetyl-alpha-D-muramoyl-L-alanine + ADP + phosphate + H(+). The protein operates within cell wall biogenesis; peptidoglycan biosynthesis. Its function is as follows. Cell wall formation. This chain is UDP-N-acetylmuramate--L-alanine ligase, found in Bifidobacterium longum subsp. infantis (strain ATCC 15697 / DSM 20088 / JCM 1222 / NCTC 11817 / S12).